Consider the following 255-residue polypeptide: Acetylglutamate kinase (255 aa).

Residues 40–41 (GG), R62, and N153 contribute to the substrate site.

Belongs to the acetylglutamate kinase family. ArgB subfamily.

It is found in the cytoplasm. It carries out the reaction N-acetyl-L-glutamate + ATP = N-acetyl-L-glutamyl 5-phosphate + ADP. It participates in amino-acid biosynthesis; L-arginine biosynthesis; N(2)-acetyl-L-ornithine from L-glutamate: step 2/4. Its function is as follows. Catalyzes the ATP-dependent phosphorylation of N-acetyl-L-glutamate. In Bacillus anthracis (strain CDC 684 / NRRL 3495), this protein is Acetylglutamate kinase.